The sequence spans 397 residues: Protein Brevis radix-like 1 (397 aa).

Disordered stretches follow at residues 14–37 and 105–148; these read GAPP…AGEC and RAGS…EDDE. Positions 124–148 are enriched in acidic residues; that stretch reads AGDEEEEEEEEEEEGTTADGSEDDE. Positions 150 to 205 constitute a BRX 1 domain; that stretch reads KEWVAQVEPGVLITFLSLPEGGNDLKRIRFSREIFNKWQAQRWWAENYEKVMELYN. Disordered stretches follow at residues 212 to 278 and 300 to 342; these read QTPL…QQHH and SISG…DQER. A compositionally biased stretch (basic and acidic residues) spans 220 to 230; that stretch reads KSEDESLKEDI. Low complexity predominate over residues 309 to 320; it reads SSMDASMRSSSS. Positions 342–397 constitute a BRX 2 domain; sequence REWVEEDEPGVYITIRALPGGIRELRRVRFSREKFSEMHARLWWEENRARIHDQYL.

The protein belongs to the BRX family.

Its subcellular location is the nucleus. The protein is Protein Brevis radix-like 1 (BRXL1) of Oryza sativa subsp. japonica (Rice).